Here is a 205-residue protein sequence, read N- to C-terminus: Cytochrome c biogenesis ATP-binding export protein CcmA (205 aa).

Residues 2–204 enclose the ABC transporter domain; it reads LEVSNLTAIR…SPKLRKIKLG (203 aa). 34–41 provides a ligand contact to ATP; it reads GRNGTGKT.

Belongs to the ABC transporter superfamily. CcmA exporter (TC 3.A.1.107) family. In terms of assembly, the complex is composed of two ATP-binding proteins (CcmA) and two transmembrane proteins (CcmB).

It localises to the cell inner membrane. The enzyme catalyses heme b(in) + ATP + H2O = heme b(out) + ADP + phosphate + H(+). Functionally, part of the ABC transporter complex CcmAB involved in the biogenesis of c-type cytochromes; once thought to export heme, this seems not to be the case, but its exact role is uncertain. Responsible for energy coupling to the transport system. The protein is Cytochrome c biogenesis ATP-binding export protein CcmA of Vibrio parahaemolyticus serotype O3:K6 (strain RIMD 2210633).